The primary structure comprises 357 residues: Undecaprenyl-phosphate alpha-N-acetylglucosaminyl 1-phosphate transferase (357 aa).

7 helical membrane-spanning segments follow: residues Gly-40–Leu-60, Gln-64–Ile-84, Phe-124–Ile-144, Trp-183–Phe-203, Val-209–Leu-229, Met-238–Met-258, and Phe-291–Phe-311.

The protein belongs to the glycosyltransferase 4 family. WecA subfamily. Mg(2+) serves as cofactor. It depends on Mn(2+) as a cofactor.

It localises to the cell inner membrane. It catalyses the reaction di-trans,octa-cis-undecaprenyl phosphate + UDP-N-acetyl-alpha-D-glucosamine = N-acetyl-alpha-D-glucosaminyl-di-trans,octa-cis-undecaprenyl diphosphate + UMP. It participates in bacterial outer membrane biogenesis; LPS O-antigen biosynthesis. In terms of biological role, catalyzes the transfer of the GlcNAc-1-phosphate moiety from UDP-GlcNAc onto the carrier lipid undecaprenyl phosphate (C55-P), yielding GlcNAc-pyrophosphoryl-undecaprenyl (GlcNAc-PP-C55). The polypeptide is Undecaprenyl-phosphate alpha-N-acetylglucosaminyl 1-phosphate transferase (Pasteurella multocida (strain Pm70)).